The primary structure comprises 751 residues: Cyanobacterial phytochrome B (751 aa).

Cysteine 17 is a binding site for a tetrapyrrole. A chromophore binding domain region spans residues 22–511; the sequence is IHIPGLIQPH…RSAIIGIVLQ (490 aa). The GAF domain maps to 152 to 320; the sequence is TTTEISQILA…MTSVEMSAKE (169 aa). The Histidine kinase domain maps to 536–751; the sequence is IASHDLKEPL…STFYFTLQDV (216 aa). Histidine 539 is subject to Phosphohistidine; by autocatalysis.

It in the N-terminal section; belongs to the phytochrome family. In terms of processing, contains one covalently linked tetrapyrrole chromophore.

The enzyme catalyses ATP + protein L-histidine = ADP + protein N-phospho-L-histidine.. In terms of biological role, photoreceptor which exists in two forms that are reversibly interconvertible by light: the R form that absorbs maximally in the red region of the spectrum and the FR form that absorbs maximally in the far-red region. The sequence is that of Cyanobacterial phytochrome B (bphB) from Nostoc sp. (strain PCC 7120 / SAG 25.82 / UTEX 2576).